We begin with the raw amino-acid sequence, 121 residues long: Putative iron-sulfur cluster insertion protein ErpA (121 aa).

Residues cysteine 49, cysteine 113, and cysteine 115 each contribute to the iron-sulfur cluster site.

Belongs to the HesB/IscA family. Homodimer. It depends on iron-sulfur cluster as a cofactor.

In terms of biological role, required for insertion of 4Fe-4S clusters. The polypeptide is Putative iron-sulfur cluster insertion protein ErpA (Polaromonas sp. (strain JS666 / ATCC BAA-500)).